Here is a 157-residue protein sequence, read N- to C-terminus: Cyclic pyranopterin monophosphate synthase (157 aa).

Substrate contacts are provided by residues 75-77 and 111-112; these read LCH and ME. Asp126 is a catalytic residue.

The protein belongs to the MoaC family. In terms of assembly, homohexamer; trimer of dimers.

The enzyme catalyses (8S)-3',8-cyclo-7,8-dihydroguanosine 5'-triphosphate = cyclic pyranopterin phosphate + diphosphate. The protein operates within cofactor biosynthesis; molybdopterin biosynthesis. In terms of biological role, catalyzes the conversion of (8S)-3',8-cyclo-7,8-dihydroguanosine 5'-triphosphate to cyclic pyranopterin monophosphate (cPMP). This Novosphingobium aromaticivorans (strain ATCC 700278 / DSM 12444 / CCUG 56034 / CIP 105152 / NBRC 16084 / F199) protein is Cyclic pyranopterin monophosphate synthase.